A 152-amino-acid chain; its full sequence is Deoxyuridine 5'-triphosphate nucleotidohydrolase (152 aa).

Substrate-binding positions include 71 to 73 (RSG), Asn-84, 88 to 90 (LID), and Met-98.

The protein belongs to the dUTPase family. Mg(2+) is required as a cofactor.

The catalysed reaction is dUTP + H2O = dUMP + diphosphate + H(+). Its pathway is pyrimidine metabolism; dUMP biosynthesis; dUMP from dCTP (dUTP route): step 2/2. Functionally, this enzyme is involved in nucleotide metabolism: it produces dUMP, the immediate precursor of thymidine nucleotides and it decreases the intracellular concentration of dUTP so that uracil cannot be incorporated into DNA. This chain is Deoxyuridine 5'-triphosphate nucleotidohydrolase, found in Erwinia tasmaniensis (strain DSM 17950 / CFBP 7177 / CIP 109463 / NCPPB 4357 / Et1/99).